We begin with the raw amino-acid sequence, 336 residues long: MKHFSDQTWRSPQQSAVITYSPAYTLVPTYECFNRCTYCNFRRDPGMDEWLSLSTAQQRLLTVRDRGVCEVLILSGEVHPQSPRRAAWRQRLIELAELALDMGFLPHTNAGPLNRAEMIALQNVNVSLGLMLEQLTPQLQRTVHRAAPSKDPQLRLQQLEQAGELGIPFTTGLLLGIGETSRDRLETLEAIAACHDRWGHIQEVILQPHSPGRQQAIQHPPLAPDELIDCVAIARQVLPTSIAIQVPPNLLTQPQQLADCLGAGARDLGGIVPYDEVNPDYQHHDLDELREALAQQGWQLQPRLPVYPHLVDRLPQRLQTHVAAWLNRFNSQSRSS.

The 232-residue stretch at 18 to 249 folds into the Radical SAM core domain; the sequence is ITYSPAYTLV…TSIAIQVPPN (232 aa). 3 residues coordinate [4Fe-4S] cluster: Cys-32, Cys-36, and Cys-39.

It belongs to the radical SAM superfamily. CofG family. In terms of assembly, consists of two subunits, CofG and CofH. [4Fe-4S] cluster serves as cofactor.

The catalysed reaction is 5-amino-5-(4-hydroxybenzyl)-6-(D-ribitylimino)-5,6-dihydrouracil + S-adenosyl-L-methionine = 7,8-didemethyl-8-hydroxy-5-deazariboflavin + 5'-deoxyadenosine + L-methionine + NH4(+) + H(+). The protein operates within cofactor biosynthesis; coenzyme F0 biosynthesis. Functionally, catalyzes the radical-mediated synthesis of 7,8-didemethyl-8-hydroxy-5-deazariboflavin from 5-amino-5-(4-hydroxybenzyl)-6-(D-ribitylimino)-5,6-dihydrouracil. The protein is 7,8-didemethyl-8-hydroxy-5-deazariboflavin synthase of Synechococcus elongatus (strain ATCC 33912 / PCC 7942 / FACHB-805) (Anacystis nidulans R2).